Consider the following 425-residue polypeptide: MKKWDYQNVRGTQDYLPEDESVRVWLRRELEEVFQQYGCKPMETPMINYTDLLASKYGGGAEIKKEMYTLTDRGKRALALRYDLTIPFAKVMAMNPDIRKPFKRYEIGKVFRDGPIKAGRFREFTQCDVDVAGVDSPLAEAELLEMATEVFRRIGLNMTIQYNNRKLLTGMLDICGVSKDQHSAVILILDKREKIGDKQVVNELKEMGVDGKAISKIAQWLKQMSQSGIVDFATDRPTTPIMAEGIAELQELEEALRYLNIDSQCTFNPFLARGLEIYTGTVYELFLTEGAIQSSVGSGGRYDQAISGLTGEEQPMPTVGISFGIDVIYTALKMEGRINQKPLLDYYVIPLQKQKEALAVASSLRKQGFRVDVEFKNKKLTKALDRANKEKIPFVILIGEEEVASGRYKLKNMETGAEQHVPFSF.

It belongs to the class-II aminoacyl-tRNA synthetase family. Homodimer.

Its subcellular location is the cytoplasm. The enzyme catalyses tRNA(His) + L-histidine + ATP = L-histidyl-tRNA(His) + AMP + diphosphate + H(+). The polypeptide is Histidine--tRNA ligase 2 (Shouchella clausii (strain KSM-K16) (Alkalihalobacillus clausii)).